A 206-amino-acid chain; its full sequence is Max dimerization protein 3 (206 aa).

Residues 8–25 (IQVLLQAAEFLERREREA) form an interaction with SIN3A and SIN3B region. Positions 57-109 (SGRHVHNELEKRRRAQLKRCLEQLRQQMPLGVDHTRYTTLSLLRGARMHIQKL) constitute a bHLH domain.

Efficient DNA binding requires dimerization with another bHLH protein. Binds DNA as a heterodimer with MAX. Interacts with SIN3A AND SIN3B. Interacts with RNF17.

It localises to the nucleus. Its function is as follows. Transcriptional repressor. Binds with MAX to form a sequence-specific DNA-binding protein complex which recognizes the core sequence 5'-CAC[GA]TG-3'. Antagonizes MYC transcriptional activity by competing for MAX and suppresses MYC dependent cell transformation. The chain is Max dimerization protein 3 (Mxd3) from Rattus norvegicus (Rat).